The following is a 440-amino-acid chain: Protein eva-1 homolog C (440 aa).

Residues 1-13 (MLLPGHPRPPPAP) show a composition bias toward pro residues. Residues 1-23 (MLLPGHPRPPPAPQSAQNQGLRR) are disordered. Positions 1–48 (MLLPGHPRPPPAPQSAQNQGLRRQVEPPGQLLRLFYCTVLVCSKETSA) are cleaved as a signal peptide. At 49 to 321 (LTDFSGYLTK…AYIRAHPERA (273 aa)) the chain is on the extracellular side. 3 N-linked (GlcNAc...) asparagine glycosylation sites follow: asparagine 62, asparagine 109, and asparagine 165. Positions 67 to 159 (ACDGDYLNLQ…KYLLVSFKCQ (93 aa)) constitute an SUEL-type lectin 1 domain. Positions 168–260 (VCENQELKLH…KYLTVAYACV (93 aa)) constitute an SUEL-type lectin 2 domain. Residues 322-342 (ALLFMSSVCIGLLLTLCALVI) form a helical membrane-spanning segment. The Cytoplasmic segment spans residues 343-440 (RVSCTKDFRE…SLPRNVGHFY (98 aa)). A disordered region spans residues 364 to 384 (SDKAEEDSEEDLEEEDSSDSQ). Over residues 367-381 (AEEDSEEDLEEEDSS) the composition is skewed to acidic residues.

The protein belongs to the EVA1 family. Ubiquitous.

The protein resides in the cell membrane. Binds heparin. The chain is Protein eva-1 homolog C (Eva1c) from Mus musculus (Mouse).